Consider the following 196-residue polypeptide: Pyridoxal 5'-phosphate synthase subunit PdxT (196 aa).

Residue 47-49 (GES) participates in L-glutamine binding. Cys-79 (nucleophile) is an active-site residue. Residues Arg-106 and 134 to 135 (IR) contribute to the L-glutamine site. Residues His-170 and Glu-172 each act as charge relay system in the active site.

The protein belongs to the glutaminase PdxT/SNO family. In terms of assembly, in the presence of PdxS, forms a dodecamer of heterodimers. Only shows activity in the heterodimer.

It catalyses the reaction aldehydo-D-ribose 5-phosphate + D-glyceraldehyde 3-phosphate + L-glutamine = pyridoxal 5'-phosphate + L-glutamate + phosphate + 3 H2O + H(+). The enzyme catalyses L-glutamine + H2O = L-glutamate + NH4(+). The protein operates within cofactor biosynthesis; pyridoxal 5'-phosphate biosynthesis. Functionally, catalyzes the hydrolysis of glutamine to glutamate and ammonia as part of the biosynthesis of pyridoxal 5'-phosphate. The resulting ammonia molecule is channeled to the active site of PdxS. The polypeptide is Pyridoxal 5'-phosphate synthase subunit PdxT (Bacillus anthracis (strain A0248)).